Here is a 714-residue protein sequence, read N- to C-terminus: MEMASAFTLNVRLDNIAVITIDVPGEKMNTLKAEFASQVRAIIKQLRENKELRGVVFVSAKPDNFIAGADINMIGNCKTAQEAEALARQGQQLMAEIHALPVPVIAAIHGACLGGGLELALACHGRMCTDDPKTVLGLPEVQLGLLPGSGGTQRLPRLIGVSTALEMILTGKQLRAKQALKLGLVDDVVPQSILLEAAVELAKQDRPSSRPLPVRERILAGPLGRALLFKMVGKKTEHKTQGNYPATERILEVVETGLAQGTSSGYDAEARAFGELAMTPQSQALRSIFFASTEVKKDPGSDAPPAPLNSVGILGGGLMGGGIAYVTACKAGLPVRIKDINPQGINHALKYSWDQLEGKVRRRHLKASERDRQLALISGTTDYRGFAHRDLIIEAVFENLELKQQMVAEVEQNCAAHTIFASNTSSLPIGDIAAHATRPEQVIGLHFFSPVEKMPLVEIIPHAGTSAQTIATTVKLAKKQGKTPIVVRDKAGFYVNRILAPYINEAIRMLTEGERVEHIDAALVKFGFPVGPIQLLDEVGIDTGTKIIPVLEAAYGERFSAPANVVSSILNDDRKGRKNGRGFYLYGQKGRKSKKQVDPAIYPLIGTQGQGRLSAPQVAERCVMLMLNEAVRCLDEQVIRSVRDGDIGAVFGIGFPPFLGGPFRYIDSLGAGEVVAIMQRLATQYGSRFTPCERLVEMSKRGESFWKTTATDLQ.

Positions 1-190 (MEMASAFTLN…KLGLVDDVVP (190 aa)) are enoyl-CoA hydratase. The segment at 306–714 (APLNSVGILG…FWKTTATDLQ (409 aa)) is 3-hydroxyacyl-CoA dehydrogenase.

This sequence in the N-terminal section; belongs to the enoyl-CoA hydratase/isomerase family. It in the central section; belongs to the 3-hydroxyacyl-CoA dehydrogenase family. In terms of assembly, heterotetramer of two alpha chains (FadJ) and two beta chains (FadI).

The protein localises to the cytoplasm. The catalysed reaction is a (3S)-3-hydroxyacyl-CoA = a (2E)-enoyl-CoA + H2O. It catalyses the reaction a 4-saturated-(3S)-3-hydroxyacyl-CoA = a (3E)-enoyl-CoA + H2O. The enzyme catalyses a (3S)-3-hydroxyacyl-CoA + NAD(+) = a 3-oxoacyl-CoA + NADH + H(+). It carries out the reaction (3S)-3-hydroxybutanoyl-CoA = (3R)-3-hydroxybutanoyl-CoA. It participates in lipid metabolism; fatty acid beta-oxidation. In terms of biological role, catalyzes the formation of a hydroxyacyl-CoA by addition of water on enoyl-CoA. Also exhibits 3-hydroxyacyl-CoA epimerase and 3-hydroxyacyl-CoA dehydrogenase activities. This Escherichia coli O17:K52:H18 (strain UMN026 / ExPEC) protein is Fatty acid oxidation complex subunit alpha.